Reading from the N-terminus, the 85-residue chain is U4-theraphotoxin-Hhn1t (85 aa).

The first 22 residues, 1–22, serve as a signal peptide directing secretion; the sequence is MKVTLIAILTCAAVLVLHTTAA. A propeptide spanning residues 23–48 is cleaved from the precursor; that stretch reads EELEAESQLMEVGMPDTELAAVDEER. Cystine bridges form between C52-C66, C56-C77, and C71-C82.

It belongs to the neurotoxin 12 (Hwtx-2) family. 02 (Hwtx-2) subfamily. In terms of tissue distribution, expressed by the venom gland.

Its subcellular location is the secreted. Postsynaptic neurotoxin. This is U4-theraphotoxin-Hhn1t from Cyriopagopus hainanus (Chinese bird spider).